A 134-amino-acid chain; its full sequence is Profilin-2 (134 aa).

A disulfide bridge connects residues C13 and C118. The Involved in PIP2 interaction signature appears at 84–100 (AVIRGKKGSGGITIKKT). At T114 the chain carries Phosphothreonine.

This sequence belongs to the profilin family. As to quaternary structure, occurs in many kinds of cells as a complex with monomeric actin in a 1:1 ratio. In terms of processing, phosphorylated by MAP kinases.

The protein localises to the cytoplasm. The protein resides in the cytoskeleton. In terms of biological role, binds to actin and affects the structure of the cytoskeleton. At high concentrations, profilin prevents the polymerization of actin, whereas it enhances it at low concentrations. By binding to PIP2, it inhibits the formation of IP3 and DG. This is Profilin-2 (PRO2) from Olea europaea (Common olive).